A 407-amino-acid chain; its full sequence is Multifunctional CCA protein (407 aa).

ATP-binding residues include G8 and R11. Positions 8 and 11 each coordinate CTP. Mg(2+)-binding residues include D21 and D23. 3 residues coordinate ATP: R91, R137, and R140. 3 residues coordinate CTP: R91, R137, and R140. Positions 225-326 (CGDHVMRVLD…LRLLKDCDAL (102 aa)) constitute an HD domain.

Belongs to the tRNA nucleotidyltransferase/poly(A) polymerase family. Bacterial CCA-adding enzyme type 1 subfamily. As to quaternary structure, monomer. Can also form homodimers and oligomers. Mg(2+) serves as cofactor. Ni(2+) is required as a cofactor.

It catalyses the reaction a tRNA precursor + 2 CTP + ATP = a tRNA with a 3' CCA end + 3 diphosphate. The enzyme catalyses a tRNA with a 3' CCA end + 2 CTP + ATP = a tRNA with a 3' CCACCA end + 3 diphosphate. In terms of biological role, catalyzes the addition and repair of the essential 3'-terminal CCA sequence in tRNAs without using a nucleic acid template. Adds these three nucleotides in the order of C, C, and A to the tRNA nucleotide-73, using CTP and ATP as substrates and producing inorganic pyrophosphate. tRNA 3'-terminal CCA addition is required both for tRNA processing and repair. Also involved in tRNA surveillance by mediating tandem CCA addition to generate a CCACCA at the 3' terminus of unstable tRNAs. While stable tRNAs receive only 3'-terminal CCA, unstable tRNAs are marked with CCACCA and rapidly degraded. In Chromobacterium violaceum (strain ATCC 12472 / DSM 30191 / JCM 1249 / CCUG 213 / NBRC 12614 / NCIMB 9131 / NCTC 9757 / MK), this protein is Multifunctional CCA protein.